We begin with the raw amino-acid sequence, 610 residues long: UvrABC system protein C (610 aa).

The GIY-YIG domain occupies 16 to 94 (SQPGVYRMYD…IKLYQPRYNV (79 aa)). Residues 204–239 (DQVLNQLVARMEQASGDLRFEEAGRLRDQIQAVRRV) form the UVR domain.

Belongs to the UvrC family. As to quaternary structure, interacts with UvrB in an incision complex.

The protein localises to the cytoplasm. In terms of biological role, the UvrABC repair system catalyzes the recognition and processing of DNA lesions. UvrC both incises the 5' and 3' sides of the lesion. The N-terminal half is responsible for the 3' incision and the C-terminal half is responsible for the 5' incision. In Erwinia tasmaniensis (strain DSM 17950 / CFBP 7177 / CIP 109463 / NCPPB 4357 / Et1/99), this protein is UvrABC system protein C.